Consider the following 106-residue polypeptide: Putative protein LRRC37A5P (106 aa).

The chain is Putative protein LRRC37A5P (LRRC37A5P) from Homo sapiens (Human).